Reading from the N-terminus, the 941-residue chain is Immediate-early protein 1 (941 aa).

Disordered stretches follow at residues 1 to 23 and 567 to 632; these read MEPAKPSGNNMGSNDERMQDYRP and NIHM…TDQL. Residues 14-23 show a composition bias toward basic and acidic residues; it reads NDERMQDYRP. Residues 567–584 show a composition bias toward polar residues; it reads NIHMNSTDENTPFSNSIC. Over residues 606 to 626 the composition is skewed to basic residues; sequence KPKKRVAKRKHVSSKSPKNKK.

The sequence is that of Immediate-early protein 1 (U90/U89) from Homo sapiens (Human).